The sequence spans 488 residues: Acetyl-coenzyme A carboxylase carboxyl transferase subunit beta, chloroplastic (488 aa).

In terms of domain architecture, CoA carboxyltransferase N-terminal spans 227–488 (LWIQCDNCYG…LHAFFPLNTN (262 aa)). Residues Cys-231, Cys-234, Cys-247, and Cys-250 each coordinate Zn(2+). Residues 231 to 250 (CDNCYGLMYKKVKMNVCEQC) form a C4-type zinc finger.

This sequence belongs to the AccD/PCCB family. As to quaternary structure, acetyl-CoA carboxylase is a heterohexamer composed of biotin carboxyl carrier protein, biotin carboxylase and 2 subunits each of ACCase subunit alpha and ACCase plastid-coded subunit beta (accD). It depends on Zn(2+) as a cofactor. Accumulates in fatty acids synthesizing tissues such as embryos, expanding leaves, flower buds, flowers, and developing siliques.

The protein localises to the plastid. It localises to the chloroplast membrane. Its subcellular location is the chloroplast stroma. The enzyme catalyses N(6)-carboxybiotinyl-L-lysyl-[protein] + acetyl-CoA = N(6)-biotinyl-L-lysyl-[protein] + malonyl-CoA. The protein operates within lipid metabolism; malonyl-CoA biosynthesis; malonyl-CoA from acetyl-CoA: step 1/1. Component of the acetyl coenzyme A carboxylase (ACC) complex. Biotin carboxylase (BC) catalyzes the carboxylation of biotin on its carrier protein (BCCP) and then the CO(2) group is transferred by the transcarboxylase to acetyl-CoA to form malonyl-CoA. In Arabidopsis thaliana (Mouse-ear cress), this protein is Acetyl-coenzyme A carboxylase carboxyl transferase subunit beta, chloroplastic.